Consider the following 3603-residue polypeptide: MTKANSIQDIYPLSYMQEGMLFHSLLQKDSQAYVEQASFTIEGKVNPQFFQNSINALVERHDIFRTIFISQNVSSPQQVVLRERNVIVLEEDITHLNEAEQSQFIEQWKEKDRDRGFHLQKDVLMRIALIQTGESQYSCIWTFHHIMMDGWCLSIVLKEFLHIYASYVNASPITLEPVQPYGKYIKWLMEQDKEQAVSYWDHYLSGHEQQTVLPKQKKTKGKSRQEHVTFSFSKEESSRLSELAAREEVTLSTIFHTIWGILLQKYNNNDDAVFGSVISGRPAEIEGIEHMVGLFINTMPVRVQGAKTPFLQLIKDMQKDRLAAEAYSYHPLYEIQSRSAVKQGLIDHILVFENYPVQQEIQMLNKQEHASDLFQIHNFTVADETNYSFYLMVAPGEEIHIKMNYDAEQHDRSFVLSVKEHLLNAVSQILNNPNLPPEEIDITTDTEKRQLIGEITDQTPVYETIHAMFEKQAEKTPDAHAVIDQACSLTYRELNKAANRLARHLRMKGVVRQEPVAIMMERSAAFITGVLGILKAGGAIVPVDPHYPADRIRYILHDCGCSHVVSQAHLPSSLEDNYIITHPEDIESKVDGSNIKSVNNADDLLYMIYTSGTTGKPKGVQFEHRNMANLLKFEYTHSGIDFEADVLQFATPSFDVCYQEIFSALLKGGTLHIVPEAIKRDVPQLFAFINKHQTNIVFLPTAFIKMIFSERELANSFPDGVKHLIAAGEQLMISDLFQDVLRKRGIHLHNHYGPSETHVVSTYTIHPGDPIPELPPIGKPIGCTDLYILNHQKQLQPCGVPGELYISGASVARGYVNHDKLTSDKFSSDPFKPDVIMYRTGDLARRLEDGNIEYIGRADNQVKIRGYRIEPQEIEVTLMNHPDISEAAILIWQDQNGEHELCAYYCSVQKLNTIDLRSYMASELPEYMIPAKWIWVDSIPLTPNGKVDRAALPEPDASISGNPYTAPRNLLEAKLSQLFEDVLKNGHIGIQDNFFDNGGHSLKATVLMSRIAKEFHVQVSLKDIFAHPTVEGLALIIREAEQNLYAAIEPAEKRDTYPVSSAQKRIYVLQQLDEGVAYNMPAVLELEGALDVAKLSAVCKELISRHEPLRTSFVSGADDEPVQRIHTEVPFTLSKETTIEGFVRPFDLSQAPLFRAGLIEVSNEKHVLLVDMHHIISDGVSVQLLIREFTDLYANRQLKPLRIQYKDYAVWQQKFKKGDSYQKQETYWQQQFSGDLPILELPTDKRRPAERQFIGGKVTFQLDKEITARIKRLAHKNRSTLYMTLLALYSAFLSRLSGQDDIVIGSPIAGRPHADLEAVLGMFVNTLALRTRPAGNKTFEEFLKEVRQTALEAYEHQDYPFEELVDKLGVQREMSRNPLFDTTLVLQNMEQQKLKMNDVQLQWNDLEHPISKFDISLYVTEHDSELFCQFEYSTALFEKETIQRWASLFTTLVEHTAASPETELDNIPILTKEEERDFIESCHLFEETGYSMNQTLHYALEQQAEKTPDQAAVIFEDGVMTYKELNEQANRIAWELIGRGVKPETTVAIIGKRSPEMLLGIYGILKAGGAYLPIDPDYPEERISFLLEDSGTNILLLQSAGLHVPEFTGEIVYLNQTNSGLAHRLSNPNVDVLPQSLAYVIYTSGSTGMPKGVEIEHRSAVNFLNSLQSRYQLKHSDMIMHKTSYSFDASIWELFWWPYAGASVYLLPQGGEKEPEVIAKAIEEQKITAMHFVPSMLHAFLEHIKYRSVPIKTNRLKRVFSGGEQLGTHLVSRFYELLPNVSITNSYGPTEATVEAAFFDCPPHEKLERIPIGKPVHHVRLYLLNQNQRMLPVGCIGELYIAGAGVARGYLNRPALTEERFLEDPFYPGERMYKTGDVARWLPDGNVEFLGRTDDQVKIRGYRIEPGEIEAALRSIEGVREAAVTVRTDSGEPELCAYVEGLQRNEVRAQLERLLPGYMVPAYMIEMEQWPVTPSGKLDRNALPAPGGAADAETYTAPRNVTEMKLSQLWEDVLKNGPVGIHDNFFDRGGHSLKATALVSRITKEFDVQVPLKDVFAHPTVEGLATVIREGTDSPYEAIKPAEKQETYPVSSAQKRIYVLQQLEDGGTGYNMPAVLELEGKLNPERMDRAFQELIKRHESLRTSFEQDEGGDPVQRIHDEVPFTLQTTVLGARTEQEAAAAFIKPFDLSQAPLFRAQIVKVSDERHLLLVDMHHIISDGVSVNILIQEFGELYNNRKLPALRIQYKDYAVWQEGFKTGDAYKMQEAYWLKQLEGELPVLDLPADHARPPVRSFAGDKVSFTLEPEVASGLHKLARENGSTLYMVLLAAYTAFLSRLSGQEDIIVGSPIAGRPHKDLEPILGMFVNTLALRTRPEGGKPFVQYLQEVRETALEAFEHQNYPFEELVDKLELTRDMSRNPVFDAMLVVQNNDYEPLHLHDLQMKPAQVSHLVSKFDLTLQASEGDGNIHFLFEYSTALFEKTTIERWASHLTNVLSIIGKNPKVTLNHIDILTQEERHQLLNEFNTGQANQYGVQTISQLFEQQAARTPKASALVSGDKTLTYQELDEWSNGIARALRSRGVKPDTPVGIMMHRSFSMIASILGVWKAGGCYVPIDPEYPKERKRYILSDSGTKLLMTINEADLGVLADFEGEILTIESVEEDDKSPLPQMSSAHHLAYIIYTSGTTGRPKGVMVEHKGIANTLQWRRNAYAFNETDTILQLFSFSFDGFITSMFTPLLSGAKAVLLHEEEAKDILAIKHQLSRQRITHMIIVPVLYRALLDVVQPEDVKTLRVVTLAGEAADRELIARSLAICPHTELANEYGPTENSVATTVMRHMEKQAYVSIGQPIDGTQVLILNSNHQLQPIGVAGELCIAGTGLARGYVNLPELTERAFTQNPFKPEARMYRTGDAARWMADGTLEYLGRIDDQVKIRGYRVETKEIESVIRCIKGVKDAAVVAHVTASGQTELSAYVVTKPGLSTNAVRSELQNKLPVFMHPAFIEKLDSLPLSPNGKLDRGALPKPVYNHEGERPFLPPSSKMEQILADIWKEVLGAEKIGTADSFFELGGDSIKALQVSARLHRIGKQMAVKDLFSHPTIQELAAYIRDSDTSSSQAAVEGDVQWSPVQKWFLSQDIKEKHHFNQSVMLHRSTSVQEDALRKTLKAITCHHDALRMVFTQNEQGKWDQYNRPLSHSDDALYGLQMIDLSAPDGTDGNRPYEPLIKRHVLDIQQKMDLKNGPLLQAGLFHTIDGDFLFLSAHHLVVDGISWRVLLEDLALGYRQAAGGEDIKLPPKTSSFKAYAKKLSDYAESQQLMKQLKYWREAEEYQTEALPFDQIDGTRAHEGQRSTISFTLNDKETAALLKDANSAYNTDTQDMLLASVILALRHWTNQSAFKLSLEGHGREDVLKGIDVSRTIGWFTAIYPLLIKLNADLPDSEESMVHVLKTTKDTLRRVPDKGFGYGVIKYLTPPGKKDINFTGAPEISFNYLGQFESGRTAEVPEEDAFSFSPLGAGGDISTTWNREQSLDISAIAAEGKLTVNMTYDNARFQRKTIEQLSETCRQFLLQLIEHCQNKSETEKTISDFDDQELTEDALQEIADMLSFH.

The interval 7–306 (IQDIYPLSYM…NTMPVRVQGA (300 aa)) is condensation 1. Residues 7 to 1043 (IQDIYPLSYM…ALIIREAEQN (1037 aa)) are domain 1 (proline-activating). Residues 490–889 (TYRELNKAAN…NHPDISEAAI (400 aa)) form an adenylation 1 region. The region spanning 966–1041 (APRNLLEAKL…GLALIIREAE (76 aa)) is the Carrier 1 domain. Residue serine 1001 is modified to O-(pantetheine 4'-phosphoryl)serine. The segment at 1053–1334 (KRDTYPVSSA…NTLALRTRPA (282 aa)) is condensation 2. Residues 1053–2069 (KRDTYPVSSA…TVEGLATVIR (1017 aa)) form a domain 2 (glutamine-activating) region. Residues 1521 to 1924 (TYKELNEQAN…SIEGVREAAV (404 aa)) are adenylation 2. The 76-residue stretch at 1997–2072 (APRNVTEMKL…GLATVIREGT (76 aa)) folds into the Carrier 2 domain. Serine 2032 carries the post-translational modification O-(pantetheine 4'-phosphoryl)serine. Positions 2084–2374 (KQETYPVSSA…NTLALRTRPE (291 aa)) are condensation 3. Positions 2084 to 3596 (KQETYPVSSA…ELTEDALQEI (1513 aa)) are domain 3 (proline-activating). The adenylation 3 stretch occupies residues 2560 to 2956 (TYQELDEWSN…CIKGVKDAAV (397 aa)). In terms of domain architecture, Carrier 3 spans 3034-3108 (PPSSKMEQIL…ELAAYIRDSD (75 aa)). The residue at position 3069 (serine 3069) is an O-(pantetheine 4'-phosphoryl)serine. The epimerization stretch occupies residues 3116–3596 (VEGDVQWSPV…ELTEDALQEI (481 aa)).

Belongs to the ATP-dependent AMP-binding enzyme family. It depends on pantetheine 4'-phosphate as a cofactor.

In terms of biological role, this protein is a multifunctional enzyme, able to activate and polymerize the amino acids Pro, Gln and Tyr as part of the biosynthesis of the lipopeptide antibiotic plipastatin. The Tyr residue is further epimerized to the D-isomer form. The activation sites for these amino acids consist of individual domains. This Bacillus subtilis (strain 168) protein is Plipastatin synthase subunit D (ppsD).